A 307-amino-acid polypeptide reads, in one-letter code: Probable RuBisCO transcriptional regulator (307 aa).

One can recognise an HTH lysR-type domain in the interval 5 to 62 (FTLQQLRIFKAIASEKSFTQAAEILFVSQPSLSKQIKTLENRLGILLLNRTGNKILLT). Residues 22–41 (FTQAAEILFVSQPSLSKQIK) constitute a DNA-binding region (H-T-H motif).

The protein belongs to the LysR transcriptional regulatory family.

It localises to the plastid. Its subcellular location is the chloroplast. Its function is as follows. Trans-acting transcriptional regulator of RuBisCO genes (rbcL and rbcS) expression. The sequence is that of Probable RuBisCO transcriptional regulator (rbcR-A) from Thalassiosira pseudonana (Marine diatom).